A 142-amino-acid polypeptide reads, in one-letter code: Transcriptional regulator MraZ (142 aa).

2 consecutive SpoVT-AbrB domains span residues 5 to 51 (ASSL…PRPE) and 77 to 120 (AMDV…DKAT).

The protein belongs to the MraZ family. Forms oligomers.

Its subcellular location is the cytoplasm. The protein localises to the nucleoid. This Variovorax paradoxus (strain S110) protein is Transcriptional regulator MraZ.